Here is a 92-residue protein sequence, read N- to C-terminus: Signal recognition particle 19 kDa protein (92 aa).

The protein belongs to the SRP19 family. Part of the signal recognition particle protein translocation system, which is composed of SRP and FtsY. Archaeal SRP consists of a 7S RNA molecule of 300 nucleotides and two protein subunits: SRP54 and SRP19.

The protein localises to the cytoplasm. Involved in targeting and insertion of nascent membrane proteins into the cytoplasmic membrane. Binds directly to 7S RNA and mediates binding of the 54 kDa subunit of the SRP. The polypeptide is Signal recognition particle 19 kDa protein (Haloferax volcanii (strain ATCC 29605 / DSM 3757 / JCM 8879 / NBRC 14742 / NCIMB 2012 / VKM B-1768 / DS2) (Halobacterium volcanii)).